A 432-amino-acid chain; its full sequence is Glutamate-1-semialdehyde 2,1-aminomutase (432 aa).

Lys272 bears the N6-(pyridoxal phosphate)lysine mark.

This sequence belongs to the class-III pyridoxal-phosphate-dependent aminotransferase family. HemL subfamily. As to quaternary structure, homodimer. Requires pyridoxal 5'-phosphate as cofactor.

The protein resides in the cytoplasm. The catalysed reaction is (S)-4-amino-5-oxopentanoate = 5-aminolevulinate. It participates in porphyrin-containing compound metabolism; protoporphyrin-IX biosynthesis; 5-aminolevulinate from L-glutamyl-tRNA(Glu): step 2/2. The protein operates within porphyrin-containing compound metabolism; chlorophyll biosynthesis. This chain is Glutamate-1-semialdehyde 2,1-aminomutase, found in Trichodesmium erythraeum (strain IMS101).